The primary structure comprises 226 residues: Charged multivesicular body protein 4 (226 aa).

Residues 22–88 (IQKLRETENM…DGTLSTIEMQ (67 aa)) are a coiled coil. The segment at 169–226 (QENFDKEIIGIPEPTPTLPEAPTEDLPEKAKEKKKATTTTAVEDDDDPDMKQLLSWSN) is disordered.

The protein belongs to the SNF7 family. In terms of assembly, homopolymer; forms elongated striated filaments of uniform ~10nm width. Monomers interact in a staggered arrangement mediated by complementary charged electrostatic surfaces. Interacts with l(2)gd1 (via DM14 domains 1 and 3); the interaction is direct and blocks access to the surface involved in homopolymerization. This interaction may be required for the ESCRT-III complex role in multivesicular body formation. Expressed at considerably higher levels in testis than in ovary. Expressed in midgut, eye, mouthparts and male accessory gland.

The protein resides in the endosome. It is found in the multivesicular body. Its subcellular location is the midbody. With respect to regulation, may be regulated by aurB/Aurora kinase B-dependent phosphorylation. Its function is as follows. Probable core polymerisation component of the endosomal sorting required for transport (ESCRT) III complex involved in multiple cellular processes requiring the outward bending of membranes, including vesicle budding, membrane repair and cytokinesis. The ESCRT pathway involves 4 complexes (ESCRT-0, -I, -II and -III) that sequentially assemble on the cytoplasmic side of membranes and induce membrane remodeling, budding and scission. As part of the ESCRT-III complex, involved in the budding of intraluminal vesicles (ILVs) into endosomes to form multivesicular bodies (MVBs), which target their contents for degradation via the endolysosomal pathway. Involved in regulation of signal transduction pathways, including the Notch and BMP/decapentaplegic (dpp) pathways, by sequestering the intracellular domains of activated receptors into ILVs, isolating them from the cytoplasm and targeting them for lysosomal degradation. Involved in targeting ubiquitilated proteins, such as mono-ubiquitilanated N/Notch, to MVBs for degradation. Plays a role in wing development by regulating Notch signaling. Involved in abscission of germline cells during oogenesis. Involved in spermiogenesis. Required for efficient cytoplasmic isolation and abscission during cytokinesis of epithelial sensory organ precursor cells. May be involved in septate junction remodeling and maintenance. This Drosophila melanogaster (Fruit fly) protein is Charged multivesicular body protein 4.